Reading from the N-terminus, the 295-residue chain is MKLVYKNYHETLNQHLMNICEKVNISFEFFPPNNILSEKNLWQVIDKLKLLTPKFFSVTHGTNSKIRATCTSNIVKKIKKYTGIETVPHLTCINSTEEELKVIAKTYWDSGIRHILALRGDIFNTNCKPKIYAVDLIKLLKSIANFEISVAAYPEVHPEAVNAKYDIINLKRKVEAGATRAITQFFFNIDCFLRFRDLCVKNNITIDIVPGIFPISNFKQLLKFSSVSNVSIPKWLCCMFHGLDNDLNTSRIIGSSIAIDMVKVLYSEGIRSFHFYTLNKSEISFAICKILENKS.

Glu28 serves as the catalytic Proton donor/acceptor. NADH is bound at residue Thr59. 12 residues coordinate FAD: His89, Arg119, Gly120, Asp121, Ala133, Tyr153, His157, Ala160, Asp166, Asn169, Arg172, and Lys173. Asp121 contacts (6S)-5-methyl-5,6,7,8-tetrahydrofolate. Gln184 serves as a coordination point for NADH. Residues Gln184, Gln220, and Lys280 each contribute to the (6S)-5-methyl-5,6,7,8-tetrahydrofolate site.

It belongs to the methylenetetrahydrofolate reductase family. FAD is required as a cofactor.

The catalysed reaction is (6S)-5-methyl-5,6,7,8-tetrahydrofolate + NAD(+) = (6R)-5,10-methylene-5,6,7,8-tetrahydrofolate + NADH + H(+). It functions in the pathway one-carbon metabolism; tetrahydrofolate interconversion. It participates in amino-acid biosynthesis; L-methionine biosynthesis via de novo pathway. In terms of biological role, catalyzes the NADH-dependent reduction of 5,10-methylenetetrahydrofolate to 5-methyltetrahydrofolate. Is required to provide the methyl group necessary for methionine synthetase to convert homocysteine to methionine; the methyl group is given by 5-methyltetrahydrofolate. The chain is 5,10-methylenetetrahydrofolate reductase (metF) from Buchnera aphidicola subsp. Baizongia pistaciae (strain Bp).